A 283-amino-acid polypeptide reads, in one-letter code: Undecaprenyl-diphosphatase (283 aa).

Transmembrane regions (helical) follow at residues Pro46–Phe66, Val95–Trp115, Val127–Met147, Leu154–Ile174, Phe200–Ala220, Ala227–Ile247, and Thr259–Phe279.

The protein belongs to the UppP family.

It is found in the cell inner membrane. It carries out the reaction di-trans,octa-cis-undecaprenyl diphosphate + H2O = di-trans,octa-cis-undecaprenyl phosphate + phosphate + H(+). In terms of biological role, catalyzes the dephosphorylation of undecaprenyl diphosphate (UPP). Confers resistance to bacitracin. This chain is Undecaprenyl-diphosphatase, found in Synechococcus sp. (strain CC9902).